The primary structure comprises 80 residues: Translation initiation factor IF-1, chloroplastic (80 aa).

Positions 1 to 74 (MKEQKWIHEG…TRGRIIYRLR (74 aa)) constitute an S1-like domain.

The protein belongs to the IF-1 family. In terms of assembly, component of the 30S ribosomal translation pre-initiation complex which assembles on the 30S ribosome in the order IF-2 and IF-3, IF-1 and N-formylmethionyl-tRNA(fMet); mRNA recruitment can occur at any time during PIC assembly.

The protein localises to the plastid. Its subcellular location is the chloroplast. In terms of biological role, one of the essential components for the initiation of protein synthesis. Stabilizes the binding of IF-2 and IF-3 on the 30S subunit to which N-formylmethionyl-tRNA(fMet) subsequently binds. Helps modulate mRNA selection, yielding the 30S pre-initiation complex (PIC). Upon addition of the 50S ribosomal subunit IF-1, IF-2 and IF-3 are released leaving the mature 70S translation initiation complex. This chain is Translation initiation factor IF-1, chloroplastic, found in Illicium parviflorum (Yellow anise tree).